The sequence spans 535 residues: Signal transduction histidine-protein kinase AfsQ2 (535 aa).

The Cytoplasmic segment spans residues 1–30 (MTREHQGGTRGLAAARKGFWSGLRFTSLRL). The chain crosses the membrane as a helical span at residues 31–52 (RLVLVFGLVALTAAVSASGIAY). Over 53-198 (WLNREAVLTR…SLEPEAKDLN (146 aa)) the chain is Extracellular. A helical membrane pass occupies residues 199–219 (SLAWSLGIATALALLGSALLA). Over 220–535 (QALATTVLKP…DRGKDAKGQV (316 aa)) the chain is Cytoplasmic. Residues 224–276 (TTVLKPVHRLGVAARRLGEGKLDTRLRVSGTDELADLSRTFNSAAENLEKRVA) enclose the HAMP domain. One can recognise a Histidine kinase domain in the interval 291 to 510 (DMSHELRTPL…VFTLRLPQDP (220 aa)). Histidine 294 bears the Phosphohistidine mark. Residues 493–535 (ENAPEGGAVFTLRLPQDPSPPADEDGGPDEETEDRGKDAKGQV) form a disordered region. Residues 514–525 (ADEDGGPDEETE) are compositionally biased toward acidic residues. The span at 526–535 (DRGKDAKGQV) shows a compositional bias: basic and acidic residues.

The protein localises to the cell membrane. It catalyses the reaction ATP + protein L-histidine = ADP + protein N-phospho-L-histidine.. Functionally, forms part of a two-component regulatory system AfsQ1/AfsQ2 involved in secondary metabolism. May activate AfsQ1 by phosphorylation. The sequence is that of Signal transduction histidine-protein kinase AfsQ2 (afsQ2) from Streptomyces coelicolor (strain ATCC BAA-471 / A3(2) / M145).